The sequence spans 423 residues: Serine--tRNA ligase (423 aa).

230–232 (TAE) is a binding site for L-serine. An ATP-binding site is contributed by 261-263 (RQE). Glu284 is a binding site for L-serine. Position 348-351 (348-351 (EISS)) interacts with ATP. Ser384 is a binding site for L-serine.

It belongs to the class-II aminoacyl-tRNA synthetase family. Type-1 seryl-tRNA synthetase subfamily. Homodimer. The tRNA molecule binds across the dimer.

The protein resides in the cytoplasm. It catalyses the reaction tRNA(Ser) + L-serine + ATP = L-seryl-tRNA(Ser) + AMP + diphosphate + H(+). The enzyme catalyses tRNA(Sec) + L-serine + ATP = L-seryl-tRNA(Sec) + AMP + diphosphate + H(+). Its pathway is aminoacyl-tRNA biosynthesis; selenocysteinyl-tRNA(Sec) biosynthesis; L-seryl-tRNA(Sec) from L-serine and tRNA(Sec): step 1/1. Its function is as follows. Catalyzes the attachment of serine to tRNA(Ser). Is also able to aminoacylate tRNA(Sec) with serine, to form the misacylated tRNA L-seryl-tRNA(Sec), which will be further converted into selenocysteinyl-tRNA(Sec). The polypeptide is Serine--tRNA ligase (Thermoanaerobacter pseudethanolicus (strain ATCC 33223 / 39E) (Clostridium thermohydrosulfuricum)).